The following is a 341-amino-acid chain: tRNA N6-adenosine threonylcarbamoyltransferase (341 aa).

Positions 111 and 115 each coordinate Fe cation. Residues 133–137 (AVSGG), aspartate 166, glycine 179, aspartate 183, and asparagine 273 contribute to the substrate site. Aspartate 301 contacts Fe cation.

This sequence belongs to the KAE1 / TsaD family. It depends on Fe(2+) as a cofactor.

Its subcellular location is the cytoplasm. The catalysed reaction is L-threonylcarbamoyladenylate + adenosine(37) in tRNA = N(6)-L-threonylcarbamoyladenosine(37) in tRNA + AMP + H(+). Its function is as follows. Required for the formation of a threonylcarbamoyl group on adenosine at position 37 (t(6)A37) in tRNAs that read codons beginning with adenine. Is involved in the transfer of the threonylcarbamoyl moiety of threonylcarbamoyl-AMP (TC-AMP) to the N6 group of A37, together with TsaE and TsaB. TsaD likely plays a direct catalytic role in this reaction. This chain is tRNA N6-adenosine threonylcarbamoyltransferase, found in Geobacter metallireducens (strain ATCC 53774 / DSM 7210 / GS-15).